The primary structure comprises 322 residues: Crystallin J1B (322 aa).

The protein belongs to the ADP-ribosylglycohydrolase family. J1 crystallin subfamily. In terms of tissue distribution, expressed in the rhopalia. Present in both the large and small eyes.

The protein is Crystallin J1B of Tripedalia cystophora (Jellyfish).